Consider the following 346-residue polypeptide: tRNA N6-adenosine threonylcarbamoyltransferase (346 aa).

2 residues coordinate Fe cation: H111 and H115. Substrate is bound by residues 134 to 138, D167, G180, and N279; that span reads LVSGG. D307 contributes to the Fe cation binding site.

The protein belongs to the KAE1 / TsaD family. Requires Fe(2+) as cofactor.

It localises to the cytoplasm. The catalysed reaction is L-threonylcarbamoyladenylate + adenosine(37) in tRNA = N(6)-L-threonylcarbamoyladenosine(37) in tRNA + AMP + H(+). Functionally, required for the formation of a threonylcarbamoyl group on adenosine at position 37 (t(6)A37) in tRNAs that read codons beginning with adenine. Is involved in the transfer of the threonylcarbamoyl moiety of threonylcarbamoyl-AMP (TC-AMP) to the N6 group of A37, together with TsaE and TsaB. TsaD likely plays a direct catalytic role in this reaction. The sequence is that of tRNA N6-adenosine threonylcarbamoyltransferase from Burkholderia pseudomallei (strain K96243).